The chain runs to 298 residues: Glycine--tRNA ligase alpha subunit (298 aa).

It belongs to the class-II aminoacyl-tRNA synthetase family. Tetramer of two alpha and two beta subunits.

The protein localises to the cytoplasm. The catalysed reaction is tRNA(Gly) + glycine + ATP = glycyl-tRNA(Gly) + AMP + diphosphate. The chain is Glycine--tRNA ligase alpha subunit from Helicobacter pylori (strain P12).